Consider the following 358-residue polypeptide: Pyruvate dehydrogenase E1 component subunit alpha (358 aa).

As to quaternary structure, heterodimer of an alpha and a beta chain. The cofactor is thiamine diphosphate.

It carries out the reaction N(6)-[(R)-lipoyl]-L-lysyl-[protein] + pyruvate + H(+) = N(6)-[(R)-S(8)-acetyldihydrolipoyl]-L-lysyl-[protein] + CO2. Functionally, the pyruvate dehydrogenase complex catalyzes the overall conversion of pyruvate to acetyl-CoA and CO(2). It contains multiple copies of three enzymatic components: pyruvate dehydrogenase (E1), dihydrolipoamide acetyltransferase (E2) and lipoamide dehydrogenase (E3). The protein is Pyruvate dehydrogenase E1 component subunit alpha (pdhA) of Mycoplasma genitalium (strain ATCC 33530 / DSM 19775 / NCTC 10195 / G37) (Mycoplasmoides genitalium).